We begin with the raw amino-acid sequence, 274 residues long: Long chain fatty acid elongase 5 (274 aa).

Over 1–23 (MMDQILGTNFTYEGAKEVARGLE) the chain is Extracellular. Residues 24–44 (GFSAKLAVGYIATIFGLKYYM) traverse the membrane as a helical segment. Residues 45-61 (KDRKAFDLSTPLNIWNG) lie on the Cytoplasmic side of the membrane. A helical membrane pass occupies residues 62–82 (ILSTFSLLGFLFTFPTLLSVI). Residues 83–105 (RKDGFSHTYSHVSELYTDSTSGY) lie on the Extracellular side of the membrane. The chain crosses the membrane as a helical span at residues 106–126 (WIFLWVISKIPELLDTVFIVL). The Cytoplasmic segment spans residues 127-129 (RKR). Residues 130–150 (PLIFMHWYHHALTGYYALVCY) form a helical membrane-spanning segment. At 151–156 (HEDAVH) the chain is on the extracellular side. A helical transmembrane segment spans residues 157-177 (MVWVVWMNYIIHAFMYGYYLL). The Cytoplasmic portion of the chain corresponds to 178–187 (KSLKVPIPPS). Residues 188 to 208 (VAQAITTSQMVQFAVAIFAQV) traverse the membrane as a helical segment. Topologically, residues 209 to 227 (HVSYKHYVEGVEGLAYSFR) are extracellular. The chain crosses the membrane as a helical span at residues 228-248 (GTAIGFFMLTTYFYLWIQFYK). Over 249–274 (EHYLKNGGKKYNLAKDQAKTQTKKAN) the chain is Cytoplasmic.

It belongs to the ELO family. Expressed in the gut and unidentified head cells.

It localises to the membrane. It catalyses the reaction 11-methyldodecanoyl-CoA + malonyl-CoA + H(+) = 3-oxoisopentadecanoyl-CoA + CO2 + CoA. The catalysed reaction is isopentadecanoyl-CoA + malonyl-CoA + H(+) = 3-oxoisoheptadecanoyl-CoA + CO2 + CoA. It functions in the pathway lipid metabolism; fatty acid biosynthesis. In terms of biological role, catalyzes the first and rate-limiting reaction of the four reactions that constitute the long-chain fatty acids elongation cycle. Uses malonyl-CoA to add 2 carbons per cycle to the chain of long-chain fatty acids. Condensing enzyme required for the formation of isopentadecanoate (C15iso) and isoheptadecanoate (C17iso), both play critical roles in animal development and growth. This is Long chain fatty acid elongase 5 from Caenorhabditis elegans.